A 225-amino-acid chain; its full sequence is Protein-L-isoaspartate O-methyltransferase (225 aa).

Residue Ser63 is part of the active site.

This sequence belongs to the methyltransferase superfamily. L-isoaspartyl/D-aspartyl protein methyltransferase family.

It is found in the cytoplasm. The catalysed reaction is [protein]-L-isoaspartate + S-adenosyl-L-methionine = [protein]-L-isoaspartate alpha-methyl ester + S-adenosyl-L-homocysteine. Functionally, catalyzes the methyl esterification of L-isoaspartyl residues in peptides and proteins that result from spontaneous decomposition of normal L-aspartyl and L-asparaginyl residues. It plays a role in the repair and/or degradation of damaged proteins. The protein is Protein-L-isoaspartate O-methyltransferase of Staphylothermus marinus (strain ATCC 43588 / DSM 3639 / JCM 9404 / F1).